Here is a 208-residue protein sequence, read N- to C-terminus: CASP-like protein 4A4 (208 aa).

Residues 1–53 lie on the Cytoplasmic side of the membrane; sequence MKELKDHVVVITYGPSSEASVTASPVSQQTPSLFAYSVTPSASRFSSRRASVH. The helical transmembrane segment at 54 to 74 threads the bilayer; that stretch reads VIGLVLRFITMVLCFVSALSL. The Extracellular portion of the chain corresponds to 75 to 92; the sequence is AVNVQRPSKRHLTQNSSS. Residue Asn89 is glycosylated (N-linked (GlcNAc...) asparagine). A helical membrane pass occupies residues 93 to 113; that stretch reads FASYPELLYCFGVAVIGFVYT. Over 114 to 141 the chain is Cytoplasmic; it reads SLQTFKGVCDITHRGVLISEPLSDYISF. Residues 142–162 form a helical membrane-spanning segment; that stretch reads IFDQVICYLLVSSSSVAIAWI. Residues 163 to 176 lie on the Extracellular side of the membrane; it reads QHINEDAIKTLRNN. A glycan (N-linked (GlcNAc...) asparagine) is linked at Asn175. The chain crosses the membrane as a helical span at residues 177–197; it reads SIVSVSMSFSAFLVLTLSGLL. Residues 198–208 lie on the Cytoplasmic side of the membrane; sequence SGYKLCKRFMW.

It belongs to the Casparian strip membrane proteins (CASP) family. Homodimer and heterodimers.

The protein localises to the cell membrane. The protein is CASP-like protein 4A4 of Arabidopsis thaliana (Mouse-ear cress).